The sequence spans 280 residues: Cytochrome c1 (280 aa).

An N-terminal signal peptide occupies residues 1-21 (MKKLLISAVSALVLGSGAALA). Heme c contacts are provided by C55, C58, H59, and M205. The helical transmembrane segment at 249–267 (MGLVAVVMLGLLSVMLYLT) threads the bilayer.

As to quaternary structure, the main subunits of complex b-c1 are: cytochrome b, cytochrome c1 and the Rieske protein. Post-translationally, binds 1 heme c group covalently per subunit.

Its subcellular location is the cell membrane. In terms of biological role, component of the ubiquinol-cytochrome c reductase complex (complex III or cytochrome b-c1 complex), which is a respiratory chain that generates an electrochemical potential coupled to ATP synthesis. c1 functions as an electron donor to cytochrome c. The sequence is that of Cytochrome c1 (petC) from Rhodobacter capsulatus (Rhodopseudomonas capsulata).